Here is a 212-residue protein sequence, read N- to C-terminus: Large ribosomal subunit protein uL3 (212 aa).

At Gln153 the chain carries N5-methylglutamine.

Belongs to the universal ribosomal protein uL3 family. As to quaternary structure, part of the 50S ribosomal subunit. Forms a cluster with proteins L14 and L19. Methylated by PrmB.

One of the primary rRNA binding proteins, it binds directly near the 3'-end of the 23S rRNA, where it nucleates assembly of the 50S subunit. This is Large ribosomal subunit protein uL3 from Marinobacter nauticus (strain ATCC 700491 / DSM 11845 / VT8) (Marinobacter aquaeolei).